The chain runs to 291 residues: Lysosomal amino acid transporter 1 homolog (291 aa).

Topologically, residues 1-37 are lumenal; it reads MVWKKLGSRNFSSCPSGSIQWIWDVLGECAQDGWDEA. N-linked (GlcNAc...) asparagine glycosylation occurs at Asn10. The PQ-loop 1 domain maps to 34-100; that stretch reads WDEASVGLGL…LADQLPLQTY (67 aa). A helical transmembrane segment spans residues 38–58; it reads SVGLGLISILCFAASTFPQFI. Topologically, residues 59–71 are cytoplasmic; it reads KAYKTGNMDQALS. Residues 72–92 form a helical membrane-spanning segment; that stretch reads LWFLLGWIGGDSCNLIGSFLA. The Lumenal segment spans residues 93–98; sequence DQLPLQ. The helical transmembrane segment at 99-119 threads the bilayer; sequence TYTAVYYVLADLVMLTLYFYY. Topologically, residues 120–134 are cytoplasmic; sequence KFRTRPSLLSAPINS. A helical transmembrane segment spans residues 135–155; it reads VLLFLMGMACATPLLSAAGPV. At 156–182 the chain is on the lumenal side; it reads AAPREAFRGRALLSVESGSKPFTRQEV. A helical transmembrane segment spans residues 183-203; the sequence is IGFVIGSISSVLYLLSRLPQI. The PQ-loop 2 domain occupies 184 to 243; it reads GFVIGSISSVLYLLSRLPQIRTNFLRKSTQGISYSLFALVMLGNTLYGLSVLLKNPEEGQ. The Cytoplasmic portion of the chain corresponds to 204–214; sequence RTNFLRKSTQG. A helical membrane pass occupies residues 215-235; sequence ISYSLFALVMLGNTLYGLSVL. Residues 236-254 are Lumenal-facing; that stretch reads LKNPEEGQSEGSYLLHHLP. Residues 255 to 275 traverse the membrane as a helical segment; sequence WLVGSLGVLLLDTIISIQFLV. The Cytoplasmic segment spans residues 276-291; it reads YRRSTAASELEPLLPS. The Di-leucine motif signature appears at 288–289; sequence LL.

The protein belongs to the laat-1 family.

The protein localises to the lysosome membrane. In terms of biological role, amino acid transporter that specifically mediates the pH-dependent export of the cationic amino acids arginine, histidine and lysine from lysosomes. This Homo sapiens (Human) protein is Lysosomal amino acid transporter 1 homolog.